Here is a 173-residue protein sequence, read N- to C-terminus: Large ribosomal subunit protein uL10 (173 aa).

This sequence belongs to the universal ribosomal protein uL10 family. In terms of assembly, part of the ribosomal stalk of the 50S ribosomal subunit. The N-terminus interacts with L11 and the large rRNA to form the base of the stalk. The C-terminus forms an elongated spine to which L12 dimers bind in a sequential fashion forming a multimeric L10(L12)X complex.

Its function is as follows. Forms part of the ribosomal stalk, playing a central role in the interaction of the ribosome with GTP-bound translation factors. In Myxococcus xanthus (strain DK1622), this protein is Large ribosomal subunit protein uL10.